A 226-amino-acid chain; its full sequence is Protein BASIC PENTACYSTEINE7 (226 aa).

The segment at I42–K116 is disordered. Positions R66–K76 are enriched in basic and acidic residues. The span at L88–K105 shows a compositional bias: basic residues.

It belongs to the BBR/BPC family. Expressed in seedlings, leaves and pistils. Detected in anthers, in pollen grains, in young rosette, in leaf vasculature, in the lateral and primary roots, in embryo sac, and in the whole ovule.

It is found in the nucleus. Transcriptional regulator that specifically binds to GA-rich elements (GAGA-repeats) present in regulatory sequences of genes involved in developmental processes. The sequence is that of Protein BASIC PENTACYSTEINE7 (BPC7) from Arabidopsis thaliana (Mouse-ear cress).